Consider the following 221-residue polypeptide: 5'-nucleotidase (221 aa).

The active-site Nucleophile is Asp-14.

This sequence belongs to the HAD-like hydrolase superfamily. Requires Mn(2+) as cofactor. Mg(2+) is required as a cofactor.

The enzyme catalyses a ribonucleoside 5'-phosphate + H2O = a ribonucleoside + phosphate. Specifically dephosphorylates nucleoside 5'-monophosphates to nucleosides and inorganic phosphate. Displays high activity toward 5'-UMP and 5'-IMP, significant activity against 5'-XMP and 5'-TMP, and low activity against 5'-CMP. In Pseudomonas aeruginosa (strain ATCC 15692 / DSM 22644 / CIP 104116 / JCM 14847 / LMG 12228 / 1C / PRS 101 / PAO1), this protein is 5'-nucleotidase.